A 145-amino-acid chain; its full sequence is Transcriptional regulator MraZ (145 aa).

SpoVT-AbrB domains follow at residues Glu5 to Glu47 and Ala76 to Gln119.

It belongs to the MraZ family. Forms oligomers.

It is found in the cytoplasm. The protein localises to the nucleoid. The polypeptide is Transcriptional regulator MraZ (Pelotomaculum thermopropionicum (strain DSM 13744 / JCM 10971 / SI)).